We begin with the raw amino-acid sequence, 156 residues long: ATP synthase subunit b (156 aa).

Residues 7-27 (LFAQMVVFLILAWFTMKFVWP) form a helical membrane-spanning segment.

This sequence belongs to the ATPase B chain family. As to quaternary structure, F-type ATPases have 2 components, F(1) - the catalytic core - and F(0) - the membrane proton channel. F(1) has five subunits: alpha(3), beta(3), gamma(1), delta(1), epsilon(1). F(0) has three main subunits: a(1), b(2) and c(10-14). The alpha and beta chains form an alternating ring which encloses part of the gamma chain. F(1) is attached to F(0) by a central stalk formed by the gamma and epsilon chains, while a peripheral stalk is formed by the delta and b chains.

Its subcellular location is the cell inner membrane. F(1)F(0) ATP synthase produces ATP from ADP in the presence of a proton or sodium gradient. F-type ATPases consist of two structural domains, F(1) containing the extramembraneous catalytic core and F(0) containing the membrane proton channel, linked together by a central stalk and a peripheral stalk. During catalysis, ATP synthesis in the catalytic domain of F(1) is coupled via a rotary mechanism of the central stalk subunits to proton translocation. Its function is as follows. Component of the F(0) channel, it forms part of the peripheral stalk, linking F(1) to F(0). The sequence is that of ATP synthase subunit b from Paraburkholderia xenovorans (strain LB400).